The following is a 366-amino-acid chain: uncharacterized protein (366 aa).

The interval 1–135 (MNQTGRTIGG…PPKNVDTIDK (135 aa)) is disordered. Basic and acidic residues predominate over residues 26–38 (PSEDRVSSRDETP). Position 69 is a phosphoserine (Ser-69). A Phosphothreonine modification is found at Thr-76. A Glycyl lysine isopeptide (Lys-Gly) (interchain with G-Cter in ubiquitin) cross-link involves residue Lys-78. Basic residues predominate over residues 97 to 108 (QHNHHHHRRTSH). Lys-187 participates in a covalent cross-link: Glycyl lysine isopeptide (Lys-Gly) (interchain with G-Cter in ubiquitin). Thr-189 carries the post-translational modification Phosphothreonine. Residue Lys-242 forms a Glycyl lysine isopeptide (Lys-Gly) (interchain with G-Cter in ubiquitin) linkage. Ser-288 and Ser-294 each carry phosphoserine. Residues 313-366 (THSGHLEQKDVDDNRTSVPVTATQGSGHEDVVKKENTGNKLLRRVKSLKTSKKH) are disordered. A compositionally biased stretch (basic and acidic residues) spans 316-327 (GHLEQKDVDDNR). Residues 328 to 338 (TSVPVTATQGS) show a composition bias toward polar residues. Basic and acidic residues predominate over residues 339 to 349 (GHEDVVKKENT). The segment covering 353–366 (LLRRVKSLKTSKKH) has biased composition (basic residues). Phosphoserine is present on Ser-359.

This sequence belongs to the pal1 family.

It is found in the cytoplasm. The protein localises to the nucleus. This is an uncharacterized protein from Saccharomyces cerevisiae (strain ATCC 204508 / S288c) (Baker's yeast).